The primary structure comprises 69 residues: Toxin Tma2 (69 aa).

The 65-residue stretch at 2 to 66 (KDDYPVDTAE…SPTKTSKRCN (65 aa)) folds into the LCN-type CS-alpha/beta domain. Disulfide bonds link C14–C65, C18–C41, C27–C48, and C31–C50.

The protein belongs to the long (4 C-C) scorpion toxin superfamily. Sodium channel inhibitor family. In terms of tissue distribution, expressed by the venom gland.

The protein localises to the secreted. Its function is as follows. Inhibits voltage-gated sodium channels (Nav). This toxin shows insect lethality against crickets. The chain is Toxin Tma2 from Tityus macrochirus (Scorpion).